Consider the following 154-residue polypeptide: Superoxide dismutase [Cu-Zn] (154 aa).

3 residues coordinate Cu cation: His47, His49, and His64. Cys58 and Cys147 are joined by a disulfide. His64, His72, His81, and Asp84 together coordinate Zn(2+). His121 contributes to the Cu cation binding site. Basic and acidic residues predominate over residues 124–137; the sequence is TDDLGKGENEESKK. Residues 124 to 144 are disordered; that stretch reads TDDLGKGENEESKKTGNAGTR. Residue Arg144 coordinates substrate.

It belongs to the Cu-Zn superoxide dismutase family. In terms of assembly, homodimer. Cu cation serves as cofactor. The cofactor is Zn(2+).

The protein resides in the cytoplasm. It catalyses the reaction 2 superoxide + 2 H(+) = H2O2 + O2. Functionally, destroys radicals which are normally produced within the cells and which are toxic to biological systems. This Botryotinia fuckeliana (Noble rot fungus) protein is Superoxide dismutase [Cu-Zn] (sod1).